Consider the following 260-residue polypeptide: uncharacterized protein (260 aa).

Residues 1–38 (MNWTREIEQYKQVVASYKLKMKRMEMKISDISEEKRQS) adopt a coiled-coil conformation.

This is an uncharacterized protein from Caenorhabditis elegans.